Consider the following 160-residue polypeptide: Small ribosomal subunit protein bS16 (160 aa).

The interval 115–139 is disordered; the sequence is GGPTTEATRPKKKVSAKKAAKAVES. Residues 124–134 show a composition bias toward basic residues; sequence PKKKVSAKKAA.

It belongs to the bacterial ribosomal protein bS16 family.

In Mycobacterium leprae (strain Br4923), this protein is Small ribosomal subunit protein bS16.